The sequence spans 628 residues: Netrin-4 (628 aa).

A signal peptide spans 1–19; sequence MGSCARLLLLWGCSAVAAG. One can recognise a Laminin N-terminal domain in the interval 30–261; the sequence is CEKACNPRMG…AVYDFIVKGS (232 aa). Residues N56 and N163 are each glycosylated (N-linked (GlcNAc...) asparagine). Cystine bridges form between C262/C271, C264/C293, C295/C304, C307/C329, C332/C341, C334/C359, C362/C371, C374/C392, C395/C413, C397/C420, C422/C431, and C434/C446. 3 consecutive Laminin EGF-like domains span residues 262–331, 332–394, and 395–448; these read CFCN…ECRT, CKCN…ACKA, and CSCH…GCRP. Residue N353 is glycosylated (N-linked (GlcNAc...) asparagine). An N-linked (GlcNAc...) asparagine glycan is attached at N483. Intrachain disulfides connect C506–C576 and C520–C627. An NTR domain is found at 506–627; sequence CECKEQVLGN…RVMHILKRDC (122 aa).

As to quaternary structure, may form a homodimer. Expressed in kidney, liver, heart, ovary, testis, retina, brain, olfactory bulb, and widely expressed in embryo.

The protein localises to the secreted. It localises to the extracellular space. It is found in the extracellular matrix. Its subcellular location is the basement membrane. In terms of biological role, may play an important role in neural, kidney and vascular development. Promotes neurite elongation from olfactory bulb explants. The polypeptide is Netrin-4 (Ntn4) (Mus musculus (Mouse)).